We begin with the raw amino-acid sequence, 657 residues long: Heat shock protein hsp-6 (657 aa).

Residues 1–27 (MLSARSFLSSARTIARSSLMSARSLSD) constitute a mitochondrion transit peptide. Positions 637 to 657 (KNSGGDAQEAKTAEEPKKEQN) are disordered. Basic and acidic residues predominate over residues 644-657 (QEAKTAEEPKKEQN).

This sequence belongs to the heat shock protein 70 family.

The protein resides in the mitochondrion. The polypeptide is Heat shock protein hsp-6 (Caenorhabditis elegans).